The primary structure comprises 380 residues: MMIMRKKHPLIKLINHSFIDLPAPSNISSWWNFGSLLGVCLMIQILTGLFLAMHYTSDTTTAFSSVAHICRDVNYGWLIRYLHANGASMFFICLFIHVGRGIYYGSYMLLETWNIGIILLLTTMATAFVGYVLPWGQMSFWGATVITNLLSAIPYIGTTLVEWIWGGFSVDKATLTRFFAFHFILPFIITALVLVHLLFLHETGSNNPSGLNSNSDKIPFHPYYTIKDLLGVLLLLMVLMILVLFFPDILGDPDNYTPANPLNTPAHIKPEWYFLFAYAILRSIPNKLGGVLALILSILILAAFPLLNYSKQHGLAYRPLTQFLYWVFIANLLVLTWIGGQPVEYPFTTIGQISSVLYFTIILVLMPTANAVENNILKLH.

4 helical membrane-spanning segments follow: residues 33 to 53 (FGSL…FLAM), 77 to 98 (WLIR…FIHV), 113 to 133 (WNIG…GYVL), and 178 to 198 (FFAF…VHLL). 2 residues coordinate heme b: His-83 and His-97. The heme b site is built by His-182 and His-196. Residue His-201 coordinates a ubiquinone. Helical transmembrane passes span 226-246 (IKDL…VLFF), 288-308 (LGGV…PLLN), 320-340 (LTQF…WIGG), and 347-367 (FTTI…VLMP).

Belongs to the cytochrome b family. As to quaternary structure, the cytochrome bc1 complex contains 11 subunits: 3 respiratory subunits (MT-CYB, CYC1 and UQCRFS1), 2 core proteins (UQCRC1 and UQCRC2) and 6 low-molecular weight proteins (UQCRH/QCR6, UQCRB/QCR7, UQCRQ/QCR8, UQCR10/QCR9, UQCR11/QCR10 and a cleavage product of UQCRFS1). This cytochrome bc1 complex then forms a dimer. Requires heme b as cofactor.

Its subcellular location is the mitochondrion inner membrane. Component of the ubiquinol-cytochrome c reductase complex (complex III or cytochrome b-c1 complex) that is part of the mitochondrial respiratory chain. The b-c1 complex mediates electron transfer from ubiquinol to cytochrome c. Contributes to the generation of a proton gradient across the mitochondrial membrane that is then used for ATP synthesis. This chain is Cytochrome b (MT-CYB), found in Thomasomys notatus (Distinguished oldfield mouse).